The following is a 193-amino-acid chain: Ribonuclease HII (193 aa).

The RNase H type-2 domain occupies 15–193 (YIVAGVDEAG…SYHRRSFKSC (179 aa)). Aspartate 21, glutamate 22, and aspartate 112 together coordinate a divalent metal cation.

Belongs to the RNase HII family. Mn(2+) is required as a cofactor. Requires Mg(2+) as cofactor.

The protein localises to the cytoplasm. It catalyses the reaction Endonucleolytic cleavage to 5'-phosphomonoester.. Endonuclease that specifically degrades the RNA of RNA-DNA hybrids. The protein is Ribonuclease HII (rnhB) of Rickettsia prowazekii (strain Madrid E).